Consider the following 488-residue polypeptide: HSPB1-associated protein 1 (488 aa).

The tract at residues glutamate 88 to arginine 208 is interaction with HSPB1. The JmjC domain maps to tryptophan 124–threonine 288. The segment covering glutamine 369–threonine 379 has biased composition (polar residues). The tract at residues glutamine 369–lysine 415 is disordered.

In terms of assembly, interacts with CRYAB and HSPB1. In terms of tissue distribution, widely expressed.

It localises to the cytoplasm. Functionally, may play a role in cellular stress response. The chain is HSPB1-associated protein 1 (HSPBAP1) from Homo sapiens (Human).